Consider the following 436-residue polypeptide: D-aminoacyl-tRNA deacylase (436 aa).

Belongs to the DtdA deacylase family. As to quaternary structure, monomer. Zn(2+) is required as a cofactor.

The enzyme catalyses a D-aminoacyl-tRNA + H2O = a tRNA + a D-alpha-amino acid + H(+). The catalysed reaction is glycyl-tRNA(Ala) + H2O = tRNA(Ala) + glycine + H(+). In terms of biological role, D-aminoacyl-tRNA deacylase with broad substrate specificity. By recycling D-aminoacyl-tRNA to D-amino acids and free tRNA molecules, this enzyme counteracts the toxicity associated with the formation of D-aminoacyl-tRNA entities in vivo. This chain is D-aminoacyl-tRNA deacylase, found in Methanoregula boonei (strain DSM 21154 / JCM 14090 / 6A8).